Consider the following 57-residue polypeptide: Phospholipase A2 superbin b (57 aa).

Positions 28, 30, and 32 each coordinate Ca(2+). Cys-29 and Cys-45 are oxidised to a cystine. His-48 is an active-site residue. Position 49 (Asp-49) interacts with Ca(2+).

Ca(2+) is required as a cofactor. Expressed by the venom gland.

The protein resides in the secreted. The enzyme catalyses a 1,2-diacyl-sn-glycero-3-phosphocholine + H2O = a 1-acyl-sn-glycero-3-phosphocholine + a fatty acid + H(+). Its function is as follows. Snake venom phospholipase A2 (PLA2) that inhibits collagen-induced platelet aggregation. In terms of inhibition of platelet aggregation, superbin b is more potent as superbin c, and d. PLA2 catalyzes the calcium-dependent hydrolysis of the 2-acyl groups in 3-sn-phosphoglycerides. This is Phospholipase A2 superbin b from Austrelaps superbus (Lowland copperhead snake).